The chain runs to 312 residues: Ribosomal protein L11 methyltransferase (312 aa).

Residues Thr-160, Gly-181, Asp-203, and Asn-246 each coordinate S-adenosyl-L-methionine.

It belongs to the methyltransferase superfamily. PrmA family.

The protein localises to the cytoplasm. It catalyses the reaction L-lysyl-[protein] + 3 S-adenosyl-L-methionine = N(6),N(6),N(6)-trimethyl-L-lysyl-[protein] + 3 S-adenosyl-L-homocysteine + 3 H(+). Methylates ribosomal protein L11. The sequence is that of Ribosomal protein L11 methyltransferase from Staphylococcus aureus (strain JH1).